A 432-amino-acid polypeptide reads, in one-letter code: Ribulose bisphosphate carboxylase-like protein 2 (432 aa).

Mg(2+) contacts are provided by K198, D200, and E201. K198 bears the N6-carboxylysine mark.

This sequence belongs to the RuBisCO large chain family. Type IV subfamily. As to quaternary structure, homodimer. It depends on Mg(2+) as a cofactor.

Functionally, may be involved in sulfur metabolism and oxidative stress response. Does not show RuBisCO activity. The polypeptide is Ribulose bisphosphate carboxylase-like protein 2 (rlp2) (Rhodopseudomonas palustris (strain ATCC BAA-98 / CGA009)).